We begin with the raw amino-acid sequence, 159 residues long: Transcription elongation factor GreA (159 aa).

Belongs to the GreA/GreB family.

Functionally, necessary for efficient RNA polymerase transcription elongation past template-encoded arresting sites. The arresting sites in DNA have the property of trapping a certain fraction of elongating RNA polymerases that pass through, resulting in locked ternary complexes. Cleavage of the nascent transcript by cleavage factors such as GreA or GreB allows the resumption of elongation from the new 3'terminus. GreA releases sequences of 2 to 3 nucleotides. This chain is Transcription elongation factor GreA, found in Buchnera aphidicola subsp. Acyrthosiphon pisum (strain APS) (Acyrthosiphon pisum symbiotic bacterium).